The sequence spans 258 residues: Thiazole synthase (258 aa).

Lys-100 (schiff-base intermediate with DXP) is an active-site residue. 1-deoxy-D-xylulose 5-phosphate contacts are provided by residues Gly-161, 187–188 (AG), and 209–210 (NT).

The protein belongs to the ThiG family. As to quaternary structure, homotetramer. Forms heterodimers with either ThiH or ThiS.

Its subcellular location is the cytoplasm. The enzyme catalyses [ThiS sulfur-carrier protein]-C-terminal-Gly-aminoethanethioate + 2-iminoacetate + 1-deoxy-D-xylulose 5-phosphate = [ThiS sulfur-carrier protein]-C-terminal Gly-Gly + 2-[(2R,5Z)-2-carboxy-4-methylthiazol-5(2H)-ylidene]ethyl phosphate + 2 H2O + H(+). It functions in the pathway cofactor biosynthesis; thiamine diphosphate biosynthesis. Its function is as follows. Catalyzes the rearrangement of 1-deoxy-D-xylulose 5-phosphate (DXP) to produce the thiazole phosphate moiety of thiamine. Sulfur is provided by the thiocarboxylate moiety of the carrier protein ThiS. In vitro, sulfur can be provided by H(2)S. In Campylobacter jejuni subsp. doylei (strain ATCC BAA-1458 / RM4099 / 269.97), this protein is Thiazole synthase.